We begin with the raw amino-acid sequence, 49 residues long: Large ribosomal subunit protein bL33B (49 aa).

The protein belongs to the bacterial ribosomal protein bL33 family.

The polypeptide is Large ribosomal subunit protein bL33B (Oceanobacillus iheyensis (strain DSM 14371 / CIP 107618 / JCM 11309 / KCTC 3954 / HTE831)).